The primary structure comprises 564 residues: Carbamoyl phosphate synthase large chain, N-terminal section (564 aa).

A carboxyphosphate synthetic domain region spans residues 1-399 (MPETPNKVLI…ALQKAIRSLE (399 aa)). 12 residues coordinate ATP: arginine 127, arginine 167, glycine 173, glycine 174, glutamate 206, valine 208, glutamate 213, glycine 239, valine 240, histidine 241, glutamine 282, and glutamate 296. Residues 131-325 (RAFMKKIGEP…IARIAAKIAI (195 aa)) enclose the ATP-grasp domain. Mg(2+) is bound by residues glutamine 282, glutamate 296, and asparagine 298. Positions 282, 296, and 298 each coordinate Mn(2+). The tract at residues 400-560 (IGEPGLGPSP…YSTYEEECEA (161 aa)) is oligomerization domain.

This sequence belongs to the CarB family. As to quaternary structure, composed of two chains; the small (or glutamine) chain promotes the hydrolysis of glutamine to ammonia, which is used by the large (or ammonia) chain to synthesize carbamoyl phosphate. Tetramer of heterodimers (alpha,beta)4. The cofactor is Mg(2+). Mn(2+) serves as cofactor.

It carries out the reaction hydrogencarbonate + L-glutamine + 2 ATP + H2O = carbamoyl phosphate + L-glutamate + 2 ADP + phosphate + 2 H(+). It catalyses the reaction hydrogencarbonate + NH4(+) + 2 ATP = carbamoyl phosphate + 2 ADP + phosphate + 2 H(+). It functions in the pathway amino-acid biosynthesis; L-arginine biosynthesis; carbamoyl phosphate from bicarbonate: step 1/1. The protein operates within pyrimidine metabolism; UMP biosynthesis via de novo pathway; (S)-dihydroorotate from bicarbonate: step 1/3. Large subunit of the glutamine-dependent carbamoyl phosphate synthetase (CPSase). CPSase catalyzes the formation of carbamoyl phosphate from the ammonia moiety of glutamine, carbonate, and phosphate donated by ATP, constituting the first step of 2 biosynthetic pathways, one leading to arginine and/or urea and the other to pyrimidine nucleotides. The large subunit (synthetase) binds the substrates ammonia (free or transferred from glutamine from the small subunit), hydrogencarbonate and ATP and carries out an ATP-coupled ligase reaction, activating hydrogencarbonate by forming carboxy phosphate which reacts with ammonia to form carbamoyl phosphate. The polypeptide is Carbamoyl phosphate synthase large chain, N-terminal section (carB1) (Methanopyrus kandleri (strain AV19 / DSM 6324 / JCM 9639 / NBRC 100938)).